The sequence spans 305 residues: Acetylglutamate kinase (305 aa).

Residues 67–68 (GG), R89, and N190 contribute to the substrate site.

Belongs to the acetylglutamate kinase family. ArgB subfamily.

It is found in the cytoplasm. The enzyme catalyses N-acetyl-L-glutamate + ATP = N-acetyl-L-glutamyl 5-phosphate + ADP. It functions in the pathway amino-acid biosynthesis; L-arginine biosynthesis; N(2)-acetyl-L-ornithine from L-glutamate: step 2/4. Functionally, catalyzes the ATP-dependent phosphorylation of N-acetyl-L-glutamate. The polypeptide is Acetylglutamate kinase (Bifidobacterium animalis subsp. lactis (strain AD011)).